The chain runs to 708 residues: Serine/threonine-protein kinase Nek5 (708 aa).

The region spanning 4-259 (YDVIKAIGQG…INSILKRPFL (256 aa)) is the Protein kinase domain. ATP is bound by residues 10–18 (IGQGAFGKA) and lysine 33. The active-site Proton acceptor is the aspartate 128. Disordered regions lie at residues 376–403 (SYHPIPQENTGVEDYGQETRHGPSPSQW) and 423–454 (KQLGLRPSSAEPNYNQRQELRSNGEEPRFQEL). Positions 440–454 (QELRSNGEEPRFQEL) are enriched in basic and acidic residues.

Belongs to the protein kinase superfamily. NEK Ser/Thr protein kinase family. NIMA subfamily. Mg(2+) serves as cofactor.

The protein resides in the cell projection. Its subcellular location is the cilium. It is found in the flagellum. The catalysed reaction is L-seryl-[protein] + ATP = O-phospho-L-seryl-[protein] + ADP + H(+). It catalyses the reaction L-threonyl-[protein] + ATP = O-phospho-L-threonyl-[protein] + ADP + H(+). The protein is Serine/threonine-protein kinase Nek5 (NEK5) of Homo sapiens (Human).